The following is a 149-amino-acid chain: Ribonuclease H (149 aa).

An RNase H type-1 domain is found at 1–145 (MKKVIIYTDG…CDKLANEAMD (145 aa)). Positions 9, 50, 72, and 137 each coordinate Mg(2+).

Belongs to the RNase H family. In terms of assembly, monomer. Requires Mg(2+) as cofactor.

It is found in the cytoplasm. It carries out the reaction Endonucleolytic cleavage to 5'-phosphomonoester.. Endonuclease that specifically degrades the RNA of RNA-DNA hybrids. The protein is Ribonuclease H of Clostridium botulinum (strain ATCC 19397 / Type A).